A 268-amino-acid polypeptide reads, in one-letter code: Magnesium dechelatase SGR1, chloroplastic (268 aa).

Residues 1–48 constitute a chloroplast transit peptide; sequence MCSLSAIMLLPTKLKPAYSDKRSNSSSSSSLFFNNRRSKKKNQSIVPV.

The protein belongs to the staygreen family. As to quaternary structure, interacts with HCAR, the chlorophyll catabolic enzymes (CCEs) NYC1, PAO and RCCR, and the LHCII complex. Part of a SGR1-CCE-LHCII complex, which acts in chlorophyll breakdown. As to expression, expressed in roots, leaves, seeds, flowers, buds, petals, sepals and siliques.

It is found in the plastid. Its subcellular location is the chloroplast thylakoid membrane. The catalysed reaction is chlorophyll a + 2 H(+) = pheophytin a + Mg(2+). Its function is as follows. Magnesium chelatase involved in chlorophyll a degradation in the chlorophyll-protein complexes of photosystem I (PSI) and photosystem II (PSII). Contributes to the degradation of PSI and PSII in the thylakoid membranes. Required to trigger chlorophyll degradation during natural and dark-induced leaf senescence. Mediates chlorophyll degradation during embryo degreening. Recombinant SGR1 possesses high dechelating activity against chlorophyll a, very low activity against chlorophyllide a, and no activity against chlorophyll b. Magnesium dechelation of chlorophyll a by SGR1 activates chlorophyll b degradation by inducing the expression of NYC1, an enzyme involved in chlorophyll b degradation. This chain is Magnesium dechelatase SGR1, chloroplastic, found in Arabidopsis thaliana (Mouse-ear cress).